Consider the following 341-residue polypeptide: HTH-type transcriptional repressor PurR (341 aa).

The HTH lacI-type domain occupies 2-56 (ATIKDVAKRAGVSTTTVSHVINKTRFVAEETKAAVRAAIKELHYSPSAVARSLKV). A DNA-binding region (H-T-H motif) is located at residues 4-23 (IKDVAKRAGVSTTTVSHVIN). The DNA-binding element occupies 48 to 56 (SAVARSLKV). 5 residues coordinate hypoxanthine: Y73, R190, T192, F221, and D275.

As to quaternary structure, homodimer.

The protein operates within purine metabolism; purine nucleotide biosynthesis [regulation]. Functionally, is the main repressor of the genes involved in the de novo synthesis of purine nucleotides, regulating purB, purC, purEK, purF, purHD, purL, purMN and guaBA expression. PurR is allosterically activated to bind its cognate DNA by binding the purine corepressors, hypoxanthine or guanine, thereby effecting transcription repression. This is HTH-type transcriptional repressor PurR from Pectobacterium atrosepticum (strain SCRI 1043 / ATCC BAA-672) (Erwinia carotovora subsp. atroseptica).